The primary structure comprises 623 residues: Glutathione import ATP-binding protein GsiA (623 aa).

ABC transporter domains follow at residues 15 to 269 and 314 to 564; these read VENL…RALL and LRVR…RKLL. ATP-binding positions include 49 to 56 and 357 to 364; these read GESGSGKS.

The protein belongs to the ABC transporter superfamily. Glutathione importer (TC 3.A.1.5.11) family. As to quaternary structure, the complex is composed of two ATP-binding proteins (GsiA), two transmembrane proteins (GsiC and GsiD) and a solute-binding protein (GsiB).

It localises to the cell inner membrane. It carries out the reaction glutathione(out) + ATP + H2O = glutathione(in) + ADP + phosphate + H(+). In terms of biological role, part of the ABC transporter complex GsiABCD involved in glutathione import. Responsible for energy coupling to the transport system. In Shigella boydii serotype 4 (strain Sb227), this protein is Glutathione import ATP-binding protein GsiA.